The chain runs to 296 residues: N-acetylmuramic acid 6-phosphate etherase 2 (296 aa).

Positions 55-218 (IIKSFNQGGR…STISMIGIGK (164 aa)) constitute an SIS domain. The active-site Proton donor is Glu-83. Glu-114 is an active-site residue.

The protein belongs to the GCKR-like family. MurNAc-6-P etherase subfamily. Homodimer.

The enzyme catalyses N-acetyl-D-muramate 6-phosphate + H2O = N-acetyl-D-glucosamine 6-phosphate + (R)-lactate. The protein operates within amino-sugar metabolism; N-acetylmuramate degradation. Specifically catalyzes the cleavage of the D-lactyl ether substituent of MurNAc 6-phosphate, producing GlcNAc 6-phosphate and D-lactate. This is N-acetylmuramic acid 6-phosphate etherase 2 from Enterococcus faecalis (strain ATCC 700802 / V583).